A 148-amino-acid polypeptide reads, in one-letter code: Small ribosomal subunit protein eS12B (148 aa).

This sequence belongs to the eukaryotic ribosomal protein eS12 family. Component of the small ribosomal subunit (SSU). Mature yeast ribosomes consist of a small (40S) and a large (60S) subunit. The 40S small subunit contains 1 molecule of ribosomal RNA (18S rRNA) and at least 33 different proteins. The large 60S subunit contains 3 rRNA molecules (25S, 5.8S and 5S rRNA) and at least 46 different proteins.

It localises to the cytoplasm. Functionally, component of the ribosome, a large ribonucleoprotein complex responsible for the synthesis of proteins in the cell. The small ribosomal subunit (SSU) binds messenger RNAs (mRNAs) and translates the encoded message by selecting cognate aminoacyl-transfer RNA (tRNA) molecules. The large subunit (LSU) contains the ribosomal catalytic site termed the peptidyl transferase center (PTC), which catalyzes the formation of peptide bonds, thereby polymerizing the amino acids delivered by tRNAs into a polypeptide chain. The nascent polypeptides leave the ribosome through a tunnel in the LSU and interact with protein factors that function in enzymatic processing, targeting, and the membrane insertion of nascent chains at the exit of the ribosomal tunnel. In Schizosaccharomyces pombe (strain 972 / ATCC 24843) (Fission yeast), this protein is Small ribosomal subunit protein eS12B (rps1202).